The primary structure comprises 285 residues: Glutamate racemase (285 aa).

Substrate contacts are provided by residues 28 to 29 and 60 to 61; these read DS and YG. Catalysis depends on cysteine 92, which acts as the Proton donor/acceptor. Substrate is bound at residue 93 to 94; it reads NT. Residue cysteine 204 is the Proton donor/acceptor of the active site. 205–206 serves as a coordination point for substrate; sequence TH.

This sequence belongs to the aspartate/glutamate racemases family.

The enzyme catalyses L-glutamate = D-glutamate. It functions in the pathway cell wall biogenesis; peptidoglycan biosynthesis. Its function is as follows. Provides the (R)-glutamate required for cell wall biosynthesis. The protein is Glutamate racemase of Escherichia coli (strain UTI89 / UPEC).